The sequence spans 548 residues: Chaperonin GroEL (548 aa).

ATP-binding positions include 30–33, K51, 87–91, G415, 479–481, and D495; these read TLGP, DGTTT, and NAA.

Belongs to the chaperonin (HSP60) family. As to quaternary structure, forms a cylinder of 14 subunits composed of two heptameric rings stacked back-to-back. Interacts with the co-chaperonin GroES.

Its subcellular location is the cytoplasm. It catalyses the reaction ATP + H2O + a folded polypeptide = ADP + phosphate + an unfolded polypeptide.. Together with its co-chaperonin GroES, plays an essential role in assisting protein folding. The GroEL-GroES system forms a nano-cage that allows encapsulation of the non-native substrate proteins and provides a physical environment optimized to promote and accelerate protein folding. In Pseudomonas fluorescens (strain SBW25), this protein is Chaperonin GroEL.